The following is a 514-amino-acid chain: Peptide chain release factor 3 (514 aa).

Residues 8–268 form the tr-type G domain; sequence KKRRTFAIIS…TFLKFAPEPH (261 aa). GTP is bound by residues 17–24, 85–89, and 139–142; these read SHPDAGKT, DTPGH, and NKLD.

This sequence belongs to the TRAFAC class translation factor GTPase superfamily. Classic translation factor GTPase family. PrfC subfamily.

It localises to the cytoplasm. Functionally, increases the formation of ribosomal termination complexes and stimulates activities of RF-1 and RF-2. It binds guanine nucleotides and has strong preference for UGA stop codons. It may interact directly with the ribosome. The stimulation of RF-1 and RF-2 is significantly reduced by GTP and GDP, but not by GMP. In Streptococcus thermophilus (strain CNRZ 1066), this protein is Peptide chain release factor 3.